A 450-amino-acid chain; its full sequence is Protein tweety homolog 1 (450 aa).

At 1–43 the chain is on the extracellular side; the sequence is MGAPPGYRPSAWVHLLHQLPRADFQLRPVPSGFAPQEQEYQQA. Residues 44-64 form a helical membrane-spanning segment; the sequence is LLLVAALAGLGLGLSLIFIAV. Residues 65 to 88 are Cytoplasmic-facing; sequence YLIRFCCCRPPEPPGSKTPSPGGG. Residues 89–109 traverse the membrane as a helical segment; sequence CVTWSCIVALLAGCIGIGIGF. The Extracellular segment spans residues 110–214; sequence YGNSETSDGV…DVSFVEEYRW (105 aa). N-linked (GlcNAc...) asparagine glycosylation is present at asparagine 130. The chain crosses the membrane as a helical span at residues 215–235; sequence LAYVLLLLLELLVCLFTLLGL. Over 236 to 240 the chain is Cytoplasmic; that stretch reads AKQSK. Residues 241–261 form a helical membrane-spanning segment; that stretch reads WLVIVMTVMSLLVLVLSWGSM. Residues 262–390 lie on the Extracellular side of the membrane; the sequence is GLEAATAVGL…LRGLCEDALE (129 aa). 2 N-linked (GlcNAc...) asparagine glycosylation sites follow: asparagine 284 and asparagine 355. Cysteine 303 and cysteine 370 are disulfide-bonded. A helical transmembrane segment spans residues 391 to 411; the sequence is GLLFLLLFSLLSAGALATALC. Residues 412–450 are Cytoplasmic-facing; the sequence is SLPRAWALFPPSDDYDDTDDDDPFNPQESKRFVQWQSSI. The segment at 428 to 450 is disordered; sequence DTDDDDPFNPQESKRFVQWQSSI. A Phosphoserine modification is found at serine 440.

Belongs to the tweety family. As to quaternary structure, homotetramer; disulfide-linked. Homodimer. N-glycosylated. Contains high-mannose, hybrid and complex oligosaccharides.

The protein localises to the cell membrane. The catalysed reaction is chloride(in) = chloride(out). It carries out the reaction L-glutamate(out) = L-glutamate(in). In terms of biological role, calcium-independent, swelling-dependent volume-regulated anion channel (VRAC-swell) which plays a pivotal role in the process of regulatory volume decrease (RVD) in the brain through the efflux of anions like chloride and organic osmolytes like glutamate. This Macaca fascicularis (Crab-eating macaque) protein is Protein tweety homolog 1 (TTYH1).